Reading from the N-terminus, the 826-residue chain is MATTSHVEHELLSKLIDELKVKANSDPEADVLAGRLLHRLKAESVTHTVAEYLEVFSDKFYDEEFFQMHRDELETRVSAFAQSPAYERIVSSGYLSALRYYDTYLYVGRSGKQESVQHFYMRLAGFCASTTCLYAGLRAALQRARPEIESDMEVFDYYFEHLTSQTVCCSTPFMRFAGVENSTLASCILTTPDLSSEWDVTQALYRHLGRYLFQRAGVGVGVTGAGQDGKHISLLMRMINSHVEYHNYGCKRPVSVAAYMEPWHSQIFKFLETKLPENHERCPGIFTGLFVPELFFKLFRDTPWSDWYLFDPKDAGDLERLYGEEFEREYYRLVTAGKFCGRVSIKSLMFSIVNCAVKAGSPFILLKEACNAHFWRDLQGEAMNAANLCAEVLQPSRKSVATCNLANICLPRCLVNAPLAVRAQRADTQGDELLLALPRLSVTLPGEGAVGDGFSLARLRDATQCATFVVACSILQGSPTYDSRDMASMGLGVQGLADVFADLGWQYTDPPSRSLNKEIFEHMYFTALCTSSLIGLHTRKIFPGFKQSKYAGGWFHWHDWAGTDLSIPREIWSRLSERIVRDGLFNSQFIALMPTSGCAQVTGCSDAFYPFYANASTKVTNKEEALRPNRSFWRHVRLDDREALNLVGGRVSCLPEALRQRYLRFQTAFDYNQEDLIQMSRDRAPFVDQSQSHSLFLREEDAARASTLANLLVRSYELGLKTIMYYCRIEKAADLGVMECKASAALSVPREEQNERSPAEQMPPRPMEPAQVAGPVDIMSKGPGEGPGGWCVPGGLEVCYKYRQLFSEDDLLETDGFTERACESCQ.

Substrate-binding positions include Thr171, Ser186 to Cys187, Gly217, Asn387 to Glu391, and Pro594 to Cys598. A disulfide bridge links Cys187 with Cys403. Asn387 functions as the Proton acceptor in the catalytic mechanism. Cys389 acts as the Cysteine radical intermediate in catalysis. Glu391 (proton acceptor) is an active-site residue. The segment at Ser747 to Pro769 is disordered. Residues Pro749 to Pro758 show a composition bias toward basic and acidic residues.

This sequence belongs to the ribonucleoside diphosphate reductase large chain family. Heterotetramer composed of a homodimer of the large subunit (R1) and a homodimer of the small subunit (R2). Larger multisubunit protein complex are also active, composed of (R1)n(R2)n.

It catalyses the reaction a 2'-deoxyribonucleoside 5'-diphosphate + [thioredoxin]-disulfide + H2O = a ribonucleoside 5'-diphosphate + [thioredoxin]-dithiol. Functionally, ribonucleoside-diphosphate reductase holoenzyme provides the precursors necessary for viral DNA synthesis. Allows virus growth in non-dividing cells, as well as reactivation from latency in infected hosts. Catalyzes the biosynthesis of deoxyribonucleotides from the corresponding ribonucleotides. The polypeptide is Ribonucleoside-diphosphate reductase large subunit (Homo sapiens (Human)).